The following is a 656-amino-acid chain: Chaperone protein HtpG (656 aa).

Positions methionine 1–arginine 359 are a; substrate-binding. The interval glutamate 360–arginine 575 is b. The segment at isoleucine 576–methionine 656 is c.

It belongs to the heat shock protein 90 family. In terms of assembly, homodimer.

It localises to the cytoplasm. In terms of biological role, molecular chaperone. Has ATPase activity. In Mycobacterium leprae (strain TN), this protein is Chaperone protein HtpG.